Reading from the N-terminus, the 859-residue chain is Fanconi anemia group B protein (859 aa).

Thr-2 is subject to N-acetylthreonine.

Belongs to the multisubunit FA complex composed of FANCA, FANCB, FANCC, FANCE, FANCF, FANCG, FANCL/PHF9 and FANCM. The complex is not found in FA patients.

The protein resides in the nucleus. DNA repair protein required for FANCD2 ubiquitination. This chain is Fanconi anemia group B protein (FANCB), found in Homo sapiens (Human).